The sequence spans 294 residues: 33 kDa chaperonin (294 aa).

Cystine bridges form between Cys236–Cys238 and Cys269–Cys272.

Belongs to the HSP33 family. Under oxidizing conditions two disulfide bonds are formed involving the reactive cysteines. Under reducing conditions zinc is bound to the reactive cysteines and the protein is inactive.

The protein localises to the cytoplasm. In terms of biological role, redox regulated molecular chaperone. Protects both thermally unfolding and oxidatively damaged proteins from irreversible aggregation. Plays an important role in the bacterial defense system toward oxidative stress. This chain is 33 kDa chaperonin, found in Desulforamulus reducens (strain ATCC BAA-1160 / DSM 100696 / MI-1) (Desulfotomaculum reducens).